The following is a 444-amino-acid chain: 4-O-dimethylallyl-L-tyrosine synthase (444 aa).

It belongs to the tryptophan dimethylallyltransferase family. In terms of assembly, homodimer.

The catalysed reaction is L-tyrosine + dimethylallyl diphosphate = 4-O-dimethylallyl-L-tyrosine + diphosphate. Its function is as follows. 4-O-dimethylallyl-L-tyrosine synthase; part of the gene cluster that mediates the biosynthesis of an unusual class of epipolythiodioxopiperazines (ETPs) lacking the reactive thiol group important for toxicity. Firstly, L-tyrosine is prenylated by tcpD, before undergoing condensation with L-glycine in a reaction catalyzed by the NRPS tcpP leading to the diketopiperazine (DKP) backbone. Afterwards the alpha-carbon of tyrosine is oxidized by the cytochrome P450 tcpC to form a hydroxyl group. However, in contrast other ETP biosynthesis pathways studied so far, tcpC is not able to bishydroxylate the DKP at both alpha-carbon positions, but hydroxylates the alpha-carbon of the tyrosine part and the nitrogen of the glycine part. The next steps involve an alpha,beta-elimination reaction catalyzed by tcpI, a methylation by the methyltransferase tcpN the action of the four enzyme cascade tcpG/K/J/I. Due to a dysfunctional cytochrome P450 monooxygenase tcpC, the pathway leads to the biosynthesis of probable non-toxic metabolites lacking the reactive thiol group. This Claviceps purpurea (strain 20.1) (Ergot fungus) protein is 4-O-dimethylallyl-L-tyrosine synthase.